Here is a 362-residue protein sequence, read N- to C-terminus: MKASIRVKLETLVERYEEVQHLLGDPDVIGDQNKFRALSREYSQLEEVTQCFQAYEQAQEDLVAAQEMAQEDDEEMREMAQEEIKDAKEAIERLTDELQVLLLPKDPNDERNCFLEIRAGAGGDEAGIFAGNLFRMYSRFAEKKGWRVEVMSSNEAEHGGYKEMIAKVSGEGAYGVLKFESGGHRVQRVPETESQGRVHTSACTVAVMAEIPEADLPEIKAADLKIDTFRASGAGGQHVNTTDSAIRITHLPTGTVVECQDERSQHKNKAKAMSVLAARIIQAEEARRAAAVSDTRRNLLGSGDRSDRIRTYNYPQGRVSDHRINLTVYRLNEVMEGDLGCLIEPVVLEYQADQLAALAEQN.

At Gln237 the chain carries N5-methylglutamine.

This sequence belongs to the prokaryotic/mitochondrial release factor family. In terms of processing, methylated by PrmC. Methylation increases the termination efficiency of RF1.

It localises to the cytoplasm. Peptide chain release factor 1 directs the termination of translation in response to the peptide chain termination codons UAG and UAA. The protein is Peptide chain release factor 1 of Aliivibrio fischeri (strain ATCC 700601 / ES114) (Vibrio fischeri).